Reading from the N-terminus, the 422-residue chain is MVTIVLGSQWGDEGKGKITDYLSQDATLCCRAAGGHNAGHTIVHDSVTYDFHILPSGLVSPKCINLIGAGTVVHIPSFFKELGALAEKGLVDADKRIFISDRAHVCFDLHSVVDGLEEAKLGGRKVGTTGKGIGPCYSDKAARRGVRVGEILDEEVFERKLRNLHSGYRNRFGELAYDVEEEINRFKEYRQKLKPYIIDQLPFLQKYKNDDRILVEGANALLLDLDHGTYPYVTSSSTGLGGAIQGLSINPTKIKNIIGVVKAYTTRVGSGPFPTEQLNEFGEKLQVTGREFGVTTGRKRRCGWFDLVLCRYSLAVNHYTALNLTKLDILDDFDEIKVAVAYKLPDGTRLESSYPADAGVIEKLEVEYVTLPGWKSNTMGLTKYEDLPENARKYVEYIEKGLDGVPIKWIGTGPAREHLIIR.

GTP is bound by residues 11–17 (GDEGKGK) and 39–41 (GHT). Asp12 serves as the catalytic Proton acceptor. 2 residues coordinate Mg(2+): Asp12 and Gly39. Residues 12 to 15 (DEGK), 37 to 40 (NAGH), Thr129, Arg143, Asn219, Thr234, and Arg298 each bind IMP. His40 functions as the Proton donor in the catalytic mechanism. Position 294 to 300 (294 to 300 (VTTGRKR)) interacts with substrate. Residues Arg300, 326-328 (KLD), and 411-413 (GTG) each bind GTP.

It belongs to the adenylosuccinate synthetase family. As to quaternary structure, homodimer. It depends on Mg(2+) as a cofactor.

It is found in the cytoplasm. It catalyses the reaction IMP + L-aspartate + GTP = N(6)-(1,2-dicarboxyethyl)-AMP + GDP + phosphate + 2 H(+). It participates in purine metabolism; AMP biosynthesis via de novo pathway; AMP from IMP: step 1/2. In terms of biological role, plays an important role in the de novo pathway and in the salvage pathway of purine nucleotide biosynthesis. Catalyzes the first committed step in the biosynthesis of AMP from IMP. The protein is Adenylosuccinate synthetase of Talaromyces marneffei (strain ATCC 18224 / CBS 334.59 / QM 7333) (Penicillium marneffei).